The sequence spans 128 residues: Nanos homolog 1 (128 aa).

The tract at residues 7–23 is essential for its translational repressor activity; the sequence is FDSWSDYLGLSSLISRG. A disordered region spans residues 23-56; the sequence is GLQPRGEGENPSPRWNVSCPAPAEPLPSKEPEGR. Residues 60–114 form a Nanos-type zinc finger; it reads GCGFCRSNKEAMSLYSSHRLRSLDGRVLCPVLRGYTCPLCGANGDWAHTMRYCPL. Residues cysteine 61, cysteine 64, histidine 77, cysteine 88, cysteine 96, cysteine 99, histidine 107, and cysteine 112 each coordinate Zn(2+). Short sequence motifs (C2HC) lie at residues 61 to 88 and 96 to 112; these read CGFC…RVLC and CPLC…MRYC.

Belongs to the nanos family. In terms of assembly, interacts with ccnb1.

It is found in the cytoplasm. The protein localises to the perinuclear region. Functionally, acts as a translational repressor. Can mediate repression affecting different steps in the translation process: cap-driven, IRES-driven, polyadenylated RNAs or nonpolyadenylated RNAs. Essential for the development of primordial germ cells (PGCs) by ensuring their proper migration and survival. This Xenopus borealis (Kenyan clawed frog) protein is Nanos homolog 1 (nanos1).